A 405-amino-acid polypeptide reads, in one-letter code: Arginine biosynthesis bifunctional protein ArgJ (405 aa).

Residues T152, K178, T189, E276, N400, and T405 each contribute to the substrate site. The Nucleophile role is filled by T189.

The protein belongs to the ArgJ family. As to quaternary structure, heterotetramer of two alpha and two beta chains.

Its subcellular location is the cytoplasm. It catalyses the reaction N(2)-acetyl-L-ornithine + L-glutamate = N-acetyl-L-glutamate + L-ornithine. The catalysed reaction is L-glutamate + acetyl-CoA = N-acetyl-L-glutamate + CoA + H(+). It functions in the pathway amino-acid biosynthesis; L-arginine biosynthesis; L-ornithine and N-acetyl-L-glutamate from L-glutamate and N(2)-acetyl-L-ornithine (cyclic): step 1/1. The protein operates within amino-acid biosynthesis; L-arginine biosynthesis; N(2)-acetyl-L-ornithine from L-glutamate: step 1/4. Its function is as follows. Catalyzes two activities which are involved in the cyclic version of arginine biosynthesis: the synthesis of N-acetylglutamate from glutamate and acetyl-CoA as the acetyl donor, and of ornithine by transacetylation between N(2)-acetylornithine and glutamate. This is Arginine biosynthesis bifunctional protein ArgJ from Pseudomonas putida (strain ATCC 47054 / DSM 6125 / CFBP 8728 / NCIMB 11950 / KT2440).